We begin with the raw amino-acid sequence, 418 residues long: ML-236A carboxylate methylbutanoyltransferase mlcH (418 aa).

Residue R78 participates in monacolin J binding. Catalysis depends on S81, which acts as the Acyl-ester intermediate. Monacolin J is bound by residues R178, Y193, and Y262. G370 contacts 2-methylbutanoate.

This sequence belongs to the class-A beta-lactamase family.

The catalysed reaction is ML-236A carboxylate + (S)-2-methylbutanoyl-[2-methylbutanoate polyketide synthase] = mevinic carboxylate + holo-[2-methylbutanoate polyketide synthase]. Its pathway is polyketide biosynthesis. Its function is as follows. Compactin diketide synthase; part of the gene cluster that mediates the biosynthesis of compactin, also known as mevastatin or ML-236B, and which acts as a potent competitive inhibitor of HMG-CoA reductase. Compactin biosynthesis is performed in two stages. The first stage is catalyzed by the nonaketide synthase mlcA, which belongs to type I polyketide synthases and catalyzes the iterative nine-step formation of the polyketide. This PKS stage is completed by the action of dehydrogenase mlcG, which catalyzes the NADPH-dependent reduction of the unsaturated tetra-, penta- and heptaketide intermediates that arise during the mlcA-mediated biosynthesis of the nonaketide chain and leads to dihydro-ML-236C carboxylate. Covalently bound dihydro-ML-236C carboxylate is released from mlcA by the mlcF esterase. Conversion of dihydro-ML-236C carboxylate into ML-236A carboxylate is subsequently performed with the participation of molecular oxygen and P450 monoogygenase mlcC. Finally, mlcH performs the conversion of ML-236A carboxylate to ML-236B/compactin carboxylate through the addition of the side-chain diketide moiety produced by the diketide synthase mlcB. This chain is ML-236A carboxylate methylbutanoyltransferase mlcH, found in Penicillium citrinum.